Reading from the N-terminus, the 490-residue chain is Aspartyl/glutamyl-tRNA(Asn/Gln) amidotransferase subunit B (490 aa).

The protein belongs to the GatB/GatE family. GatB subfamily. Heterotrimer of A, B and C subunits.

It catalyses the reaction L-glutamyl-tRNA(Gln) + L-glutamine + ATP + H2O = L-glutaminyl-tRNA(Gln) + L-glutamate + ADP + phosphate + H(+). The enzyme catalyses L-aspartyl-tRNA(Asn) + L-glutamine + ATP + H2O = L-asparaginyl-tRNA(Asn) + L-glutamate + ADP + phosphate + 2 H(+). Allows the formation of correctly charged Asn-tRNA(Asn) or Gln-tRNA(Gln) through the transamidation of misacylated Asp-tRNA(Asn) or Glu-tRNA(Gln) in organisms which lack either or both of asparaginyl-tRNA or glutaminyl-tRNA synthetases. The reaction takes place in the presence of glutamine and ATP through an activated phospho-Asp-tRNA(Asn) or phospho-Glu-tRNA(Gln). The protein is Aspartyl/glutamyl-tRNA(Asn/Gln) amidotransferase subunit B of Zymomonas mobilis subsp. mobilis (strain ATCC 31821 / ZM4 / CP4).